The following is a 215-amino-acid chain: Adenylate kinase (215 aa).

10-15 (GAGKGT) provides a ligand contact to ATP. The segment at 30 to 59 (STGDILRENVKNETELGKKAKEYMDKGLLV) is NMP. Residues Thr31, Arg36, 57–59 (LLV), 85–88 (GFPR), and Gln92 each bind AMP. Residues 126–163 (GRRICKNCGASFHVIYRPPQKEGVCDVCGGELYQREDD) are LID. Arg127 provides a ligand contact to ATP. 2 residues coordinate Zn(2+): Cys130 and Cys133. ATP is bound at residue 136 to 137 (SF). Zn(2+) is bound by residues Cys150 and Cys153. Residues Arg160 and Arg171 each contribute to the AMP site. Position 198 (Gln198) interacts with ATP.

It belongs to the adenylate kinase family. Monomer.

The protein localises to the cytoplasm. It carries out the reaction AMP + ATP = 2 ADP. It functions in the pathway purine metabolism; AMP biosynthesis via salvage pathway; AMP from ADP: step 1/1. Its function is as follows. Catalyzes the reversible transfer of the terminal phosphate group between ATP and AMP. Plays an important role in cellular energy homeostasis and in adenine nucleotide metabolism. This is Adenylate kinase from Caldicellulosiruptor bescii (strain ATCC BAA-1888 / DSM 6725 / KCTC 15123 / Z-1320) (Anaerocellum thermophilum).